Consider the following 528-residue polypeptide: Phosphoenolpyruvate carboxykinase (ATP) (528 aa).

3 residues coordinate substrate: Arg-54, Tyr-190, and Lys-196. ATP contacts are provided by residues Lys-196, His-215, and 231–239 (GLSGTGKTT). 2 residues coordinate Mn(2+): Lys-196 and His-215. Asp-252 serves as a coordination point for Mn(2+). Residues Glu-280, Arg-316, and Thr-441 each coordinate ATP. A substrate-binding site is contributed by Arg-316.

Belongs to the phosphoenolpyruvate carboxykinase (ATP) family. Requires Mn(2+) as cofactor.

The protein resides in the cytoplasm. It catalyses the reaction oxaloacetate + ATP = phosphoenolpyruvate + ADP + CO2. The protein operates within carbohydrate biosynthesis; gluconeogenesis. Functionally, involved in the gluconeogenesis. Catalyzes the conversion of oxaloacetate (OAA) to phosphoenolpyruvate (PEP) through direct phosphoryl transfer between the nucleoside triphosphate and OAA. The sequence is that of Phosphoenolpyruvate carboxykinase (ATP) from Sulfurimonas denitrificans (strain ATCC 33889 / DSM 1251) (Thiomicrospira denitrificans (strain ATCC 33889 / DSM 1251)).